Reading from the N-terminus, the 133-residue chain is MKFFLNTGRTIWQGEAMEAGKNLDLYVKAAGVVYINEEDMEKLGVKEGDKVKVKSEYGEVVVYVKKATERMPEGMIYIPMGPWANCVVKPDTHSTGMPTFKGYPGFYVEVEKTDEEFLDMRSLMRKKYIEAVE.

This chain is Protein FwdD (fwdD), found in Methanocaldococcus jannaschii (strain ATCC 43067 / DSM 2661 / JAL-1 / JCM 10045 / NBRC 100440) (Methanococcus jannaschii).